The following is a 449-amino-acid chain: Trigger factor (449 aa).

Positions 162–242 constitute a PPIase FKBP-type domain; that stretch reads GDFVTIDMTV…VRAVREKQVP (81 aa). A disordered region spans residues 428-449; sequence APVNLEGGSTPAAEAEPAVSEA. A compositionally biased stretch (low complexity) spans 438-449; sequence PAAEAEPAVSEA.

The protein belongs to the FKBP-type PPIase family. Tig subfamily.

The protein resides in the cytoplasm. The enzyme catalyses [protein]-peptidylproline (omega=180) = [protein]-peptidylproline (omega=0). Its function is as follows. Involved in protein export. Acts as a chaperone by maintaining the newly synthesized protein in an open conformation. Functions as a peptidyl-prolyl cis-trans isomerase. In Acidothermus cellulolyticus (strain ATCC 43068 / DSM 8971 / 11B), this protein is Trigger factor.